The chain runs to 134 residues: Ribosome-binding factor A (134 aa).

The tract at residues 115–134 is disordered; it reads EDQRQERGEIPPGSDELQPD.

The protein belongs to the RbfA family. Monomer. Binds 30S ribosomal subunits, but not 50S ribosomal subunits or 70S ribosomes.

Its subcellular location is the cytoplasm. One of several proteins that assist in the late maturation steps of the functional core of the 30S ribosomal subunit. Associates with free 30S ribosomal subunits (but not with 30S subunits that are part of 70S ribosomes or polysomes). Required for efficient processing of 16S rRNA. May interact with the 5'-terminal helix region of 16S rRNA. The chain is Ribosome-binding factor A from Synechococcus sp. (strain CC9902).